Reading from the N-terminus, the 450-residue chain is MSCLMVERCGEILFENPDQNAKCVCMLGDIRLRGQTGVRAERRGSYPFIDFRLLNSTTYSGEIGTKKKVKRLLSFQRYFHASRLLRGIIPQAPLHLLDEDYLGQARHMLSKVGMWDFDIFLFDRLTNGNSLVTLLCHLFNTHGLIHHFKLDMVTLHRFLVMVQEDYHSQNPYHNAVHAADVTQAMHCYLKEPKLASFLTPLDIMLGLLAAAAHDVDHPGVNQPFLIKTNHHLANLYQNMSVLENHHWRSTIGMLRESRLLAHLPKEMTQDIEQQLGSLILATDINRQNEFLTRLKAHLHNKDLRLEDAQDRHFMLQIALKCADICNPCRIWEMSKQWSERVCEEFYRQGELEQKFELEISPLCNQQKDSIPSIQIGFMSYIVEPLFREWAHFTGNSTLSENMLGHLAHNKAQWKSLLPRQHRSRGSSGSGPDHDHAGQGTESEEQEGDSP.

In terms of domain architecture, PDEase spans 97–420; sequence LDEDYLGQAR…AQWKSLLPRQ (324 aa). His-173 (proton donor) is an active-site residue. Residues His-177, His-213, Asp-214, and Asp-323 each contribute to the a divalent metal cation site. The interval 418 to 450 is disordered; it reads PRQHRSRGSSGSGPDHDHAGQGTESEEQEGDSP. Phosphoserine is present on Ser-426. The segment covering 441-450 has biased composition (acidic residues); that stretch reads ESEEQEGDSP.

Belongs to the cyclic nucleotide phosphodiesterase family. PDE7 subfamily. It depends on a divalent metal cation as a cofactor. As to expression, highly expressed in brain. Also expressed in heart, liver, skeletal muscle and pancreas.

It catalyses the reaction 3',5'-cyclic AMP + H2O = AMP + H(+). The protein operates within purine metabolism; 3',5'-cyclic AMP degradation; AMP from 3',5'-cyclic AMP: step 1/1. Its activity is regulated as follows. Inhibited by dipyridamole, IBMX and SCH 51866. Insensitive to zaprinast, rolipram, and milrinone. Its function is as follows. Hydrolyzes the second messenger cAMP, which is a key regulator of many important physiological processes. May be involved in the control of cAMP-mediated neural activity and cAMP metabolism in the brain. The chain is 3',5'-cyclic-AMP phosphodiesterase 7B from Homo sapiens (Human).